Consider the following 357-residue polypeptide: Uroporphyrinogen decarboxylase (357 aa).

Substrate-binding positions include 27 to 31 (RQAGR), D77, Y154, T209, and H327.

This sequence belongs to the uroporphyrinogen decarboxylase family. In terms of assembly, homodimer.

The protein localises to the cytoplasm. It carries out the reaction uroporphyrinogen III + 4 H(+) = coproporphyrinogen III + 4 CO2. It participates in porphyrin-containing compound metabolism; protoporphyrin-IX biosynthesis; coproporphyrinogen-III from 5-aminolevulinate: step 4/4. Functionally, catalyzes the decarboxylation of four acetate groups of uroporphyrinogen-III to yield coproporphyrinogen-III. The chain is Uroporphyrinogen decarboxylase from Proteus mirabilis (strain HI4320).